The primary structure comprises 399 residues: MAREKFERNKPHVNIGTIGHVDHGKTTLTAAITNVLAKKGQAQAQDYGDIDGAPEERERGITINTAHVEYETAERHYAHVDCPGHADYVKNMITGAAQMDGAILVCAATDGPMAQTKEHILLAKQVGVPALVVALNKCDMVDDEEIIELVEMEIRELLDSYDFPGDDIPIVQVSGLKALEGDSTWESKIEELMTAVDASIPEPEREIDKPFLMAVEDVFSITGRGTVATGRIERGKVKVGEEVEIVGIRDTRLTTVTGVEMFRKLLDEGMAGDNVGLLLRGVQKEDIERGMVLVKKGSITPHTKFEGEVYVLKKEEGGRHTPFFAGYRPQFYIRTTDVTGQITAFTADDGANVEMVMPGDRIKMTGELICPVAIEQGMRFAIREGGRTIGAGVVSKIIE.

The region spanning 10–204 (KPHVNIGTIG…AVDASIPEPE (195 aa)) is the tr-type G domain. A G1 region spans residues 19-26 (GHVDHGKT). GTP is bound at residue 19–26 (GHVDHGKT). Thr-26 contacts Mg(2+). The interval 60 to 64 (GITIN) is G2. Positions 81–84 (DCPG) are G3. GTP-binding positions include 81 to 85 (DCPGH) and 136 to 139 (NKCD). The segment at 136–139 (NKCD) is G4. Positions 174 to 176 (SGL) are G5.

The protein belongs to the TRAFAC class translation factor GTPase superfamily. Classic translation factor GTPase family. EF-Tu/EF-1A subfamily. In terms of assembly, monomer.

Its subcellular location is the cytoplasm. The catalysed reaction is GTP + H2O = GDP + phosphate + H(+). In terms of biological role, GTP hydrolase that promotes the GTP-dependent binding of aminoacyl-tRNA to the A-site of ribosomes during protein biosynthesis. The polypeptide is Elongation factor Tu (Prochlorococcus marinus subsp. pastoris (strain CCMP1986 / NIES-2087 / MED4)).